The chain runs to 164 residues: MSLPDKAFPVSWDQFHRDARALAWRLAGLNQTFKAIVCITRGGLVPAAIISRELNIRLIETVCVASYHDYVNQGDMVLLKGIAPELMENGGETVLVVDDLTDTGKTAAQVRTMLPRAHFACVYAKPKGVPTVDTFITEVSQDTWIYFPWDMGFTYQEPIAKGAG.

5-phospho-alpha-D-ribose 1-diphosphate is bound by residues 41 to 42 (RG) and 98 to 106 (DDLTDTGKT). Mg(2+) is bound at residue aspartate 99. Aspartate 102 and isoleucine 145 together coordinate guanine. Xanthine is bound by residues aspartate 102 and isoleucine 145. Residues 102-106 (DTGKT) and 144-145 (WI) each bind GMP.

This sequence belongs to the purine/pyrimidine phosphoribosyltransferase family. XGPT subfamily. In terms of assembly, homotetramer. Requires Mg(2+) as cofactor.

It is found in the cell inner membrane. The catalysed reaction is GMP + diphosphate = guanine + 5-phospho-alpha-D-ribose 1-diphosphate. It carries out the reaction XMP + diphosphate = xanthine + 5-phospho-alpha-D-ribose 1-diphosphate. It catalyses the reaction IMP + diphosphate = hypoxanthine + 5-phospho-alpha-D-ribose 1-diphosphate. It participates in purine metabolism; GMP biosynthesis via salvage pathway; GMP from guanine: step 1/1. It functions in the pathway purine metabolism; XMP biosynthesis via salvage pathway; XMP from xanthine: step 1/1. Its function is as follows. Purine salvage pathway enzyme that catalyzes the transfer of the ribosyl-5-phosphate group from 5-phospho-alpha-D-ribose 1-diphosphate (PRPP) to the N9 position of the 6-oxopurines guanine and xanthine to form the corresponding ribonucleotides GMP (guanosine 5'-monophosphate) and XMP (xanthosine 5'-monophosphate), with the release of PPi. To a lesser extent, also acts on hypoxanthine. This is Xanthine-guanine phosphoribosyltransferase from Rhizobium johnstonii (strain DSM 114642 / LMG 32736 / 3841) (Rhizobium leguminosarum bv. viciae).